Consider the following 106-residue polypeptide: Secreted RxLR effector protein 18 (106 aa).

The signal sequence occupies residues M1–S17. Positions R28–R39 match the RxLR-dEER motif.

The protein belongs to the RxLR effector family.

It is found in the secreted. It localises to the host cell. Functionally, effector that may act as a suppressor of cell death to interrupt plant immunity. I. The polypeptide is Secreted RxLR effector protein 18 (Plasmopara viticola (Downy mildew of grapevine)).